Reading from the N-terminus, the 430-residue chain is Probable carboxypeptidase AO090003000058 (430 aa).

A signal peptide spans 1–16; that stretch reads MKSIYSLVLCTALTAA. N-linked (GlcNAc...) asparagine glycosylation is present at N84. D156 lines the Zn(2+) pocket. E188 (proton acceptor) is an active-site residue. E189 serves as a coordination point for Zn(2+). A glycan (N-linked (GlcNAc...) asparagine) is linked at N285.

Belongs to the peptidase M20A family. Requires Zn(2+) as cofactor.

It localises to the secreted. The sequence is that of Probable carboxypeptidase AO090003000058 from Aspergillus oryzae (strain ATCC 42149 / RIB 40) (Yellow koji mold).